Consider the following 360-residue polypeptide: Malonyl CoA-acyl carrier protein transacylase, mitochondrial (360 aa).

The transit peptide at 1–24 (MKLLTFPGQGTSISISILKAIIRN) directs the protein to the mitochondrion. Catalysis depends on residues Ser105 and His235.

It belongs to the FabD family.

Its subcellular location is the mitochondrion. The enzyme catalyses holo-[ACP] + malonyl-CoA = malonyl-[ACP] + CoA. The protein operates within lipid metabolism; fatty acid biosynthesis. Its function is as follows. Involved in biosynthesis of fatty acids in mitochondria. The protein is Malonyl CoA-acyl carrier protein transacylase, mitochondrial (MCT1) of Saccharomyces cerevisiae (strain ATCC 204508 / S288c) (Baker's yeast).